Here is an 821-residue protein sequence, read N- to C-terminus: Condensin-2 complex subunit kle-2 (821 aa).

Positions 389 to 426 (VMQNDEPNTSRRPDENYAPMDFDDDFGGGGDDDDDDYI) are disordered. The segment covering 409-424 (DFDDDFGGGGDDDDDD) has biased composition (acidic residues). Positions 529 to 561 (TAILAEKKRRIKEKTAKIREARIQNMQRKRTAR) form a coiled coil.

The protein belongs to the CND2 H2 (condensin-2 subunit 2) family. Component of the condensin II complex, which contains the mix-1/SMC2 and smc-4/SMC4 heterodimer, and three non SMC subunits, capg-2, kle-2 and hcp-6 that probably regulate the complex. Within the complex, interacts with mix-1, smc-4, capg-2 and hcp-6.

It localises to the nucleus. Its subcellular location is the chromosome. It is found in the centromere. Functionally, regulatory subunit of the condensin II complex, a complex that seems to play a role in prophase chromosome condensation and in chromosome segregation in mitosis and in meiosis. The sequence is that of Condensin-2 complex subunit kle-2 (kle-2) from Caenorhabditis elegans.